Consider the following 376-residue polypeptide: Putative 12-oxophytodienoate reductase 13 (376 aa).

FMN is bound by residues 25–27, Ala58, and Gln99; that span reads PLT. 165–168 is a substrate binding site; that stretch reads HGAH. Residues Arg217, Gly301, and 322–323 contribute to the FMN site; that span reads GR.

This sequence belongs to the NADH:flavin oxidoreductase/NADH oxidase family. FMN is required as a cofactor.

Functionally, putative oxophytodienoate reductase that may be involved in the biosynthesis or metabolism of oxylipin signaling molecules. The chain is Putative 12-oxophytodienoate reductase 13 (OPR13) from Oryza sativa subsp. japonica (Rice).